A 229-amino-acid polypeptide reads, in one-letter code: Ribose-5-phosphate isomerase A (229 aa).

Substrate is bound by residues 28–31, 85–88, and 98–101; these read TGST, DGAD, and KGRG. The active-site Proton acceptor is Glu107. Substrate is bound at residue Lys125.

It belongs to the ribose 5-phosphate isomerase family. Homodimer.

It carries out the reaction aldehydo-D-ribose 5-phosphate = D-ribulose 5-phosphate. The protein operates within carbohydrate degradation; pentose phosphate pathway; D-ribose 5-phosphate from D-ribulose 5-phosphate (non-oxidative stage): step 1/1. Catalyzes the reversible conversion of ribose-5-phosphate to ribulose 5-phosphate. In Pyrococcus abyssi (strain GE5 / Orsay), this protein is Ribose-5-phosphate isomerase A.